An 874-amino-acid polypeptide reads, in one-letter code: Lon protease (874 aa).

Residues 18–261 form the Lon N-terminal domain; sequence LPVLPLDDAV…RLLTWTKEHL (244 aa). Disordered regions lie at residues 47 to 68, 120 to 144, and 298 to 318; these read VDAARTGGSAGSSDARAPGISS, GGVRPAPAGTDTTGTGTADATSGAG, and LSELDGSGGGADGASGSEPAD. The span at 124–142 shows a compositional bias: low complexity; the sequence is PAPAGTDTTGTGTADATSG. Position 430 to 437 (430 to 437) interacts with ATP; it reads GPPGVGKT. One can recognise a Lon proteolytic domain in the interval 667–851; it reads TALPGVATGL…REVLDLALEP (185 aa). Active-site residues include Ser757 and Lys800. Residues 853-874 are disordered; the sequence is FDADHGGRSPGRAGHSPTALAA.

Belongs to the peptidase S16 family. Homohexamer. Organized in a ring with a central cavity.

It is found in the cytoplasm. The catalysed reaction is Hydrolysis of proteins in presence of ATP.. Its function is as follows. ATP-dependent serine protease that mediates the selective degradation of mutant and abnormal proteins as well as certain short-lived regulatory proteins. Required for cellular homeostasis and for survival from DNA damage and developmental changes induced by stress. Degrades polypeptides processively to yield small peptide fragments that are 5 to 10 amino acids long. Binds to DNA in a double-stranded, site-specific manner. The chain is Lon protease from Frankia alni (strain DSM 45986 / CECT 9034 / ACN14a).